The sequence spans 189 residues: Elongation factor P (189 aa).

The protein belongs to the elongation factor P family.

Its subcellular location is the cytoplasm. The protein operates within protein biosynthesis; polypeptide chain elongation. Functionally, involved in peptide bond synthesis. Stimulates efficient translation and peptide-bond synthesis on native or reconstituted 70S ribosomes in vitro. Probably functions indirectly by altering the affinity of the ribosome for aminoacyl-tRNA, thus increasing their reactivity as acceptors for peptidyl transferase. This chain is Elongation factor P, found in Pseudomonas putida (strain GB-1).